We begin with the raw amino-acid sequence, 289 residues long: Serine/threonine-protein phosphatase Pgam5, mitochondrial (289 aa).

Residues 7–23 (FACGTGAGLLTFYLTKL) form a helical membrane-spanning segment.

The protein belongs to the phosphoglycerate mutase family. BPG-dependent PGAM subfamily. As to quaternary structure, interacts with Pk92B/ASK1.

It is found in the mitochondrion outer membrane. It catalyses the reaction O-phospho-L-seryl-[protein] + H2O = L-seryl-[protein] + phosphate. The enzyme catalyses O-phospho-L-threonyl-[protein] + H2O = L-threonyl-[protein] + phosphate. Functionally, displays phosphatase activity for serine/threonine residues, and dephosphorylates and activates Pk92B kinase. Has apparently no phosphoglycerate mutase activity. This chain is Serine/threonine-protein phosphatase Pgam5, mitochondrial, found in Drosophila persimilis (Fruit fly).